The primary structure comprises 393 residues: Methylthioribose kinase (393 aa).

ATP-binding positions include Asn-38, Lys-53, and 107–109 (EDL). Asp-225 is a binding site for substrate. 242–244 (DPE) lines the ATP pocket. Arg-332 contacts substrate.

It belongs to the methylthioribose kinase family. As to quaternary structure, homodimer.

It catalyses the reaction 5-(methylsulfanyl)-D-ribose + ATP = 5-(methylsulfanyl)-alpha-D-ribose 1-phosphate + ADP + H(+). It functions in the pathway amino-acid biosynthesis; L-methionine biosynthesis via salvage pathway; S-methyl-5-thio-alpha-D-ribose 1-phosphate from S-methyl-5'-thioadenosine (hydrolase route): step 2/2. Functionally, catalyzes the phosphorylation of methylthioribose into methylthioribose-1-phosphate. This chain is Methylthioribose kinase, found in Bacillus thuringiensis subsp. konkukian (strain 97-27).